A 274-amino-acid polypeptide reads, in one-letter code: Large ribosomal subunit protein uL2cz/uL2cy (274 aa).

Disordered stretches follow at residues methionine 1–lysine 23 and methionine 223–lysine 274.

Belongs to the universal ribosomal protein uL2 family. Part of the 50S ribosomal subunit.

The protein resides in the plastid. It is found in the chloroplast. This is Large ribosomal subunit protein uL2cz/uL2cy (rpl2-A) from Ranunculus macranthus (Large buttercup).